A 180-amino-acid polypeptide reads, in one-letter code: tRNA (cytidine(56)-2'-O)-methyltransferase (180 aa).

Residues Leu84 and 112–116 (GAEKV) contribute to the S-adenosyl-L-methionine site.

The protein belongs to the aTrm56 family. In terms of assembly, homodimer.

The protein localises to the cytoplasm. It carries out the reaction cytidine(56) in tRNA + S-adenosyl-L-methionine = 2'-O-methylcytidine(56) in tRNA + S-adenosyl-L-homocysteine + H(+). Its function is as follows. Specifically catalyzes the AdoMet-dependent 2'-O-ribose methylation of cytidine at position 56 in tRNAs. In Haloarcula marismortui (strain ATCC 43049 / DSM 3752 / JCM 8966 / VKM B-1809) (Halobacterium marismortui), this protein is tRNA (cytidine(56)-2'-O)-methyltransferase.